The primary structure comprises 146 residues: MSLISGIASILAIGLLSPVQSILALILLFVTVAINLYTSGYVLMGILYILVYVGAIAILFLFILSLLNIEYKPTGGMHPLVIVLILIPLIPLDIAFEPIAIVESVSTTYNELSIVGTLFYSEYAPMLVIIGIILIVSVIGAIAMTR.

4 helical membrane passes run isoleucine 10–valine 30, leucine 43–isoleucine 63, valine 81–isoleucine 101, and alanine 124–methionine 144.

This sequence belongs to the complex I subunit 6 family.

Its subcellular location is the mitochondrion membrane. The catalysed reaction is a ubiquinone + NADH + 5 H(+)(in) = a ubiquinol + NAD(+) + 4 H(+)(out). Core subunit of the mitochondrial membrane respiratory chain NADH dehydrogenase (Complex I) that is believed to belong to the minimal assembly required for catalysis. Complex I functions in the transfer of electrons from NADH to the respiratory chain. The immediate electron acceptor for the enzyme is believed to be ubiquinone. The protein is NADH-ubiquinone oxidoreductase chain 6 (NAD6) of Candida albicans (strain SC5314 / ATCC MYA-2876) (Yeast).